The chain runs to 364 residues: Serine/threonine-protein kinase ENV7 (364 aa).

Residues Cys13, Cys14, and Cys15 are each lipidated (S-palmitoyl cysteine). A Protein kinase domain is found at 30–364 (YRIQRLLGEG…LLNLLQDLDT (335 aa)). Residues 36 to 44 (LGEGGMSFV) and Lys69 contribute to the ATP site. The Proton acceptor role is filled by Asp215.

It belongs to the protein kinase superfamily. Ser/Thr protein kinase family.

The protein resides in the vacuole membrane. It catalyses the reaction L-seryl-[protein] + ATP = O-phospho-L-seryl-[protein] + ADP + H(+). The catalysed reaction is L-threonyl-[protein] + ATP = O-phospho-L-threonyl-[protein] + ADP + H(+). Its function is as follows. Serine/threonine-protein kinase involved in vacuolar processing and morphology. This Saccharomyces cerevisiae (strain ATCC 204508 / S288c) (Baker's yeast) protein is Serine/threonine-protein kinase ENV7 (ENV7).